Consider the following 65-residue polypeptide: Large ribosomal subunit protein bL35 (65 aa).

The protein belongs to the bacterial ribosomal protein bL35 family.

The chain is Large ribosomal subunit protein bL35 from Magnetococcus marinus (strain ATCC BAA-1437 / JCM 17883 / MC-1).